The following is a 256-amino-acid chain: Enolase-phosphatase E1 (256 aa).

D13 and E15 together coordinate Mg(2+). Residues 127–128 (SS) and K175 contribute to the substrate site. Position 202 (D202) interacts with Mg(2+).

Belongs to the HAD-like hydrolase superfamily. MasA/MtnC family. Monomer. The cofactor is Mg(2+).

It localises to the cytoplasm. Its subcellular location is the nucleus. It carries out the reaction 5-methylsulfanyl-2,3-dioxopentyl phosphate + H2O = 1,2-dihydroxy-5-(methylsulfanyl)pent-1-en-3-one + phosphate. It functions in the pathway amino-acid biosynthesis; L-methionine biosynthesis via salvage pathway; L-methionine from S-methyl-5-thio-alpha-D-ribose 1-phosphate: step 3/6. The protein operates within amino-acid biosynthesis; L-methionine biosynthesis via salvage pathway; L-methionine from S-methyl-5-thio-alpha-D-ribose 1-phosphate: step 4/6. Its function is as follows. Bifunctional enzyme that catalyzes the enolization of 2,3-diketo-5-methylthiopentyl-1-phosphate (DK-MTP-1-P) into the intermediate 2-hydroxy-3-keto-5-methylthiopentenyl-1-phosphate (HK-MTPenyl-1-P), which is then dephosphorylated to form the acireductone 1,2-dihydroxy-3-keto-5-methylthiopentene (DHK-MTPene). This chain is Enolase-phosphatase E1 (utr4), found in Botryotinia fuckeliana (strain B05.10) (Noble rot fungus).